The primary structure comprises 77 residues: Conotoxin Ar5.1 b (77 aa).

Residues 1-19 (MLCLPVFIILLLLASPAAS) form the signal peptide. Residues 20–44 (NPLKTRIQSDLIRAALEDADMKNEK) constitute a propeptide that is removed on maturation.

This sequence belongs to the conotoxin T superfamily. Post-translationally, contains 2 disulfide bonds that can be either 'C1-C3, C2-C4' or 'C1-C4, C2-C3', since these disulfide connectivities have been observed for conotoxins with cysteine framework V (for examples, see AC P0DQQ7 and AC P81755). Expressed by the venom duct.

The protein resides in the secreted. This chain is Conotoxin Ar5.1 b, found in Conus arenatus (Sand-dusted cone).